Consider the following 868-residue polypeptide: Programmed cell death 6-interacting protein (868 aa).

Ala-2 bears the N-acetylalanine mark. The 390-residue stretch at 3–392 (TFISVQLKKT…AQMREATTLA (390 aa)) folds into the BRO1 domain. Residues 176 to 503 (TVDISPDTVG…NFRTVLDKAV (328 aa)) form an interaction with CHMP4A, CHMP4B and CHMP4C region. The segment at 176 to 868 (TVDISPDTVG…PPQQSYYPQQ (693 aa)) is interaction with EIAV p9. An N6-acetyllysine modification is found at Lys-215. An interaction with SDCBP region spans residues 418–868 (LTKSRSVIEQ…PPQQSYYPQQ (451 aa)). Thr-479 carries the post-translational modification Phosphothreonine. The residue at position 481 (Ser-481) is a Phosphoserine. The tract at residues 503-868 (VQADGQVKEC…PPQQSYYPQQ (366 aa)) is self-association. Disordered stretches follow at residues 713–809 (IARE…YPGY) and 832–868 (PYPP…YPQQ). An interaction with TSG101 region spans residues 717–720 (PSAP). Ser-730 carries the phosphoserine modification. A compositionally biased stretch (pro residues) spans 737–763 (PTPPTPAPRTMPPTKPQPPARPPPPVL). A phosphothreonine mark is found at Thr-738 and Thr-741. Arg-745 carries the post-translational modification Omega-N-methylarginine. The span at 778–791 (GAGTAAPAPSQTPG) shows a compositional bias: low complexity. 2 stretches are compositionally biased toward pro residues: residues 792–807 (SAPP…PTYP) and 844–860 (APYP…PQPP). Residues 801 to 806 (PPYPTY) form an interaction with CEP55 region. Positions 864–868 (YYPQQ) are essential to promote virus budding.

As to quaternary structure, self-associates. Interacts with SH3KBP1/CIN85. Interacts with PDCD6 in a calcium -dependent manner. Interacts with TSG101 in a calcium-dependent manner; PDCD6IP homooligomerization may be required for TSG101-binding. Interacts with SGSM3. Directly interacts with CHMP4A, CHMP4B and CHMP4C. Directly interacts with CEP55 in a 1:2 stoechiometry. The interaction with CEP55 is required for PDCD6IP targeting to the midbody. May interact with PDGFRB. Interacts with SH3GL1 and SH3GL2/endophilin-1. Forms a complex with SDCBP and SDC2. Found in a complex with F-actin, TJP1/ZO-1 and PARD3. Interacts with CD2AP. Interacts with ARRDC1. Interacts (via BRO1 domain) with the ATG12-ATG3 conjugate; this interaction is bridged by ATG12 and promotes multiple PDCD6IP-mediated functions such as endolysosomal trafficking, macroautophagy and exosome biogenesis. (Microbial infection) Interacts with HIV-1 p6. Interacts with HIV-1 p9. In terms of assembly, (Microbial infection) Interacts with EIAV p9. As to quaternary structure, (Microbial infection) Interacts with Murine leukemia virus Gag polyprotein (via LYPX(n)L motif). (Microbial infection) Interacts with ebola virus protein VP40 (via YPx(n)L/I motif). In terms of processing, may be phosphorylated on tyrosine residues by activated PDGFRB.

The protein resides in the cytoplasm. The protein localises to the cytosol. Its subcellular location is the melanosome. It is found in the cytoskeleton. It localises to the microtubule organizing center. The protein resides in the centrosome. The protein localises to the secreted. Its subcellular location is the extracellular exosome. It is found in the cell junction. It localises to the tight junction. The protein resides in the midbody. The protein localises to the midbody ring. Functionally, multifunctional protein involved in endocytosis, multivesicular body biogenesis, membrane repair, cytokinesis, apoptosis and maintenance of tight junction integrity. Class E VPS protein involved in concentration and sorting of cargo proteins of the multivesicular body (MVB) for incorporation into intralumenal vesicles (ILVs) that are generated by invagination and scission from the limiting membrane of the endosome. Binds to the phospholipid lysobisphosphatidic acid (LBPA) which is abundant in MVBs internal membranes. The MVB pathway requires the sequential function of ESCRT-O, -I,-II and -III complexes. The ESCRT machinery also functions in topologically equivalent membrane fission events, such as the terminal stages of cytokinesis. Adapter for a subset of ESCRT-III proteins, such as CHMP4, to function at distinct membranes. Required for completion of cytokinesis. May play a role in the regulation of both apoptosis and cell proliferation. Regulates exosome biogenesis in concert with SDC1/4 and SDCBP. By interacting with F-actin, PARD3 and TJP1 secures the proper assembly and positioning of actomyosin-tight junction complex at the apical sides of adjacent epithelial cells that defines a spatial membrane domain essential for the maintenance of epithelial cell polarity and barrier. Its function is as follows. (Microbial infection) Involved in HIV-1 virus budding. Can replace TSG101 it its role of supporting HIV-1 release; this function requires the interaction with CHMP4B. The ESCRT machinery also functions in topologically equivalent membrane fission events, such as enveloped virus budding (HIV-1 and other lentiviruses). This is Programmed cell death 6-interacting protein from Homo sapiens (Human).